Here is a 197-residue protein sequence, read N- to C-terminus: Large ribosomal subunit protein bL25 (197 aa).

The protein belongs to the bacterial ribosomal protein bL25 family. CTC subfamily. As to quaternary structure, part of the 50S ribosomal subunit; part of the 5S rRNA/L5/L18/L25 subcomplex. Contacts the 5S rRNA. Binds to the 5S rRNA independently of L5 and L18.

This is one of the proteins that binds to the 5S RNA in the ribosome where it forms part of the central protuberance. This is Large ribosomal subunit protein bL25 from Streptomyces avermitilis (strain ATCC 31267 / DSM 46492 / JCM 5070 / NBRC 14893 / NCIMB 12804 / NRRL 8165 / MA-4680).